We begin with the raw amino-acid sequence, 131 residues long: Global transcriptional regulator Spx (131 aa).

The CXXC signature appears at 10 to 13; that stretch reads CTSC. C10 and C13 are joined by a disulfide.

This sequence belongs to the ArsC family. Spx subfamily. As to quaternary structure, interacts with the C-terminal domain of the alpha subunit of the RNAP. A single Spx monomer interacts with RNAP to form the transcription activation complex. Interacts with the adapter protein SpxH/YjbH.

The protein resides in the cytoplasm. Its activity is regulated as follows. Under non-stress conditions, Spx is degraded by ClpXP and, to a lesser extent, by ClpCP. Efficient dedradation by ClpXP requires the adapter protein SpxH/YjbH. Binding to SpxH/YjbH reduces the overall conformational flexibility of Spx and stabilizes the C-terminal ClpX recognition region of Spx. In addition, activity is modulated by the formation of a disulfide bound within the N-terminal Cys-X-X-Cys (CXXC) motif, which is required for the transcriptional activation of trxA and trxB, or for the activation of msrAB operon expression following paraquat oxidative stress. However, it seems that formation of the disulfide bound is not essential for induction of all Spx-controlled genes, as for example the case of BSH biosynthesis genes. Similarly, induction of the Spx regulon during cell wall stress is not accompanied by oxidation of the disulfide switch, but requires Spx stabilization by the anti-adapter protein SpxO/YirB. Global transcriptional regulator that plays a key role in stress response and exerts either positive or negative regulation of genes. Acts by interacting with the C-terminal domain of the alpha subunit of the RNA polymerase (RNAP). This interaction can enhance binding of RNAP to the promoter region of target genes and stimulate their transcription, or block interaction of RNAP with activator proteins and repress transcription. Exhibits no DNA-binding activity. Its function is as follows. Induces the expression of a large number of genes in response to a variety of stress conditions, such as disulfide, heat and cell wall stress, while concurrently repressing transcription of genes involved in various developmental and growth-related pathways during periods of extreme stress. Functions in the oxidative stress response via induction of the transcription of thioredoxin (trxA) and thioredoxin reductase (trxB) during thiol-specific oxidative (disulfide) stress. Mediates response to oxidative stress caused by paraquat (PQ) via induction of the methionine sulfoxide reductase genes, msrA and msrB. Also acts as a transcriptional activator of the bacillithiol (BSH) biosynthesis genes in response to oxidizing conditions and thio-reactive compounds. Involved in heat stress response and thermotolerance development, which results in diminished cellular protein aggregates. Plays an important adaptive role in the cell wall stress response. Participates in sulfate-dependent control of organosulfur metabolism. Negatively controls, via CymR, the expression of the organosulfur utilization operons ytmI, yxeI and ssu, and directly activates yrrT operon expression during growth in medium containing methionine as sole sulfur source. Negatively affects competence and sporulation. Inhibits biofilm formation in response to disulfide stress by repressing biofilm matrix genes. The polypeptide is Global transcriptional regulator Spx (Bacillus subtilis (strain 168)).